A 105-amino-acid chain; its full sequence is Nitrogen fixation nifHD1 region GlnB-like protein 1 (105 aa).

The protein belongs to the P(II) protein family.

Could be involved in the regulation of nitrogen fixation. The polypeptide is Nitrogen fixation nifHD1 region GlnB-like protein 1 (glnBA) (Methanosarcina barkeri).